The sequence spans 758 residues: G-protein alpha subunit activating protein gbas-1 (758 aa).

A compositionally biased stretch (acidic residues) spans 30-48; the sequence is LDEVDNADFEREDDEEEVL. The interval 30-70 is disordered; sequence LDEVDNADFEREDDEEEVLSEPSESPYTSTPKSSKRVNKTR. The span at 49–61 shows a compositional bias: low complexity; it reads SEPSESPYTSTPK. The GBA signature appears at 653 to 666; sequence ETVTVEEFLMNSYS. Residues 668-690 form a disordered region; the sequence is AAPSTSTAPAPPKAPVTAPPAPQ. Residues 676 to 689 show a composition bias toward pro residues; that stretch reads PAPPKAPVTAPPAP.

In terms of assembly, interacts (via GBA motif) with guanine nucleotide-binding protein G(o) subunit alpha goa-1 (in GDP-bound form); the interaction leads to activation of goa-1. As to expression, expressed in some neurons including the head and tail neurons, HSN and VC, in a subset of glial cells, in the distal tips cells and in the intestine.

Acts as a non-receptor guanine nucleotide exchange factor which binds to and activates G-protein alpha subunit goa-1. This Caenorhabditis elegans protein is G-protein alpha subunit activating protein gbas-1.